Consider the following 69-residue polypeptide: Conopeptide Y-Fe1 (69 aa).

A signal peptide spans Met1 to Pro20. Positions Gln21 to Ile69 are excised as a propeptide.

The protein belongs to the conotoxin M superfamily. Conopeptide Y family. In terms of tissue distribution, expressed by the venom duct.

The protein resides in the secreted. In terms of biological role, tyrosine-rich conopeptide that specifically targets voltage-gated potassium channel Kv1.6/KCNA6 (IC(50) is 8.8 uM) that is expressed in Xenopus oocytes. In vivo, causes seizures (at 5 nmol) and death (20 nmol) when intracranially injected into mice, and causes paralysis (at 10 pmol) to C.elegans. The sequence is that of Conopeptide Y-Fe1 from Conus ferrugineus (Cone snail).